The chain runs to 71 residues: uncharacterized protein (71 aa).

Positions 1-21 (MGVGLHGDHVGGELNSANAFT) are cleaved as a signal peptide.

This is an uncharacterized protein from Haemophilus influenzae (strain ATCC 51907 / DSM 11121 / KW20 / Rd).